We begin with the raw amino-acid sequence, 921 residues long: TRPM8 channel-associated factor 1 (921 aa).

In terms of domain architecture, Peptidase M60 spans 542-841 (YCWMSTGLYI…TYLQLQEAFG (300 aa)).

The protein belongs to the TCAF family. Interacts with TRPM8 (via N-terminus and C-terminus domains); the interaction inhibits TRPM8 channel activity. Interacts with TRPV6. In terms of tissue distribution, isoform 2 is expressed in the prostate and strongly expressed in cancerous prostate samples.

Its subcellular location is the cell membrane. In terms of biological role, positively regulates the plasma membrane cation channel TRPM8 activity. Involved in the recruitment of TRPM8 to the cell surface. Promotes prostate cancer cell migration inhibition in a TRPM8-dependent manner. The polypeptide is TRPM8 channel-associated factor 1 (Homo sapiens (Human)).